Consider the following 487-residue polypeptide: Glycogen synthase (487 aa).

Residue K20 participates in ADP-alpha-D-glucose binding.

It belongs to the glycosyltransferase 1 family. Bacterial/plant glycogen synthase subfamily.

The enzyme catalyses [(1-&gt;4)-alpha-D-glucosyl](n) + ADP-alpha-D-glucose = [(1-&gt;4)-alpha-D-glucosyl](n+1) + ADP + H(+). The protein operates within glycan biosynthesis; glycogen biosynthesis. Its function is as follows. Synthesizes alpha-1,4-glucan chains using ADP-glucose. The chain is Glycogen synthase from Aliivibrio fischeri (strain ATCC 700601 / ES114) (Vibrio fischeri).